The sequence spans 271 residues: Proteasome inhibitor PI31 subunit (271 aa).

At A2 the chain carries N-acetylalanine. The interval 2 to 150 is important for homodimerization and interaction with FBXO7; it reads AGLEVLFASA…PIHEQWEKAR (149 aa). S153 and S189 each carry phosphoserine. An Omega-N-methylarginine modification is found at R205. R219 is subject to Asymmetric dimethylarginine. A disordered region spans residues 226–271; the sequence is SGLPNRLPPGAVPPGARFDPFGPIGTSPSGPNPDHLPPPGYDDMYL. Position 231 is an omega-N-methylarginine (R231). S252 is subject to Phosphoserine. Pro residues predominate over residues 255–265; sequence GPNPDHLPPPG.

This sequence belongs to the proteasome inhibitor PI31 family. In terms of assembly, monomer and homodimer. Interacts with FBXO7.

It localises to the cytoplasm. It is found in the endoplasmic reticulum. Plays an important role in control of proteasome function. Inhibits the hydrolysis of protein and peptide substrates by the 20S proteasome. Also inhibits the activation of the proteasome by the proteasome regulatory proteins PA700 and PA28. This Mus musculus (Mouse) protein is Proteasome inhibitor PI31 subunit (Psmf1).